A 152-amino-acid chain; its full sequence is MQNISKILVDADACPVKDEIVQIGTKFHVEILFVASYAHRSRKQQGNWIYVDSEQDEVDFYIYKHAKATDLVITQDMGLAGLLVKKGVYVLSPRGKFVTDEQMDTILYSRYVSAKLRRQGTYTKGPKSFSKQDRQSFLTSLEKILSNYKGIL.

This sequence belongs to the UPF0178 family.

This is UPF0178 protein Bcer98_3021 from Bacillus cytotoxicus (strain DSM 22905 / CIP 110041 / 391-98 / NVH 391-98).